The sequence spans 300 residues: MNVLSLGSSSGVVWGRVPITAPAGAATGVTSRADAHSQMRRYAQTGPTAKLSSAPMTTMWGAPLHRRWRGSRLRDPRQAKFLTLASLKWVLANRAYTPWYLVRYWRLLRFKLANPHIITRGMVFLGKGVEIHATPELAQLEIGRWVHIGDKNTIRAHEGSLRFGDKVVLGRDNVINTYLDIEIGDSVLMADWCYICDFDHRMDDITLPIKDQGIIKSPVRIGPDTWIGVKVSVLRGTTIGRGCVLGSHAVVRGAIPDYSIAVGAPAKVVKNRQLSWEASAAQRAELAAALADIERKKAAR.

Residues 1–25 (MNVLSLGSSSGVVWGRVPITAPAGA) form the signal peptide.

It belongs to the transferase hexapeptide repeat family.

Its function is as follows. May be involved in the biosynthesis of 6-O-methylglucosyl-containing lipopolysaccharides (MGLP). Functionally, regulates host peroxisome homeostasis in response to intracellular redox levels to favor mycobacterial infection in macrophage. Induces the expression of host peroxisome biogenesis and proliferation factors as well as peroxisome associated enzymes. Inhibits the induction of host pexophagy mechanism by down-regulating the expression of pexophagy associated proteins and adapter molecules in infected macrophages. However, during increased oxidative stress conditions, it induces degradation of dysfunctional and damaged peroxisomes. Regulation of peroxisome biogenesis and degradation is dependent upon host p-mTORC1 mediated signaling pathway. The polypeptide is Probable acetyltransferase Rv3034c (Mycobacterium tuberculosis (strain ATCC 25618 / H37Rv)).